The following is a 96-amino-acid chain: uncharacterized protein (96 aa).

The N-linked (GlcNAc...) asparagine glycan is linked to N4. Residues 59–81 (VFFTIFDTIITIIVRSGIPFPLL) traverse the membrane as a helical segment.

It localises to the membrane. This is an uncharacterized protein from Saccharomyces cerevisiae (strain ATCC 204508 / S288c) (Baker's yeast).